The chain runs to 109 residues: ATPase inhibitor mai-2, mitochondrial (109 aa).

Disordered regions lie at residues 18-39 (FSAGGHGDGAGRGGGSGGSIRD) and 73-109 (EEVKHHEGQLENHKKVLERHQQRISEIEAQERALGKE). Positions 21-35 (GGHGDGAGRGGGSGG) are enriched in gly residues. The stretch at 55–109 (YFYKKQKAQLQELREHIQEEVKHHEGQLENHKKVLERHQQRISEIEAQERALGKE) forms a coiled coil.

This sequence belongs to the ATPase inhibitor family.

It is found in the mitochondrion. In terms of biological role, thought to be a regulatory component of the ATP-synthesizing complex in the mitochondria. Activity is pH dependent. The sequence is that of ATPase inhibitor mai-2, mitochondrial (mai-2) from Caenorhabditis elegans.